The primary structure comprises 508 residues: ATP synthase subunit alpha, chloroplastic (508 aa).

170-177 (GDRQTGKT) is a binding site for ATP.

This sequence belongs to the ATPase alpha/beta chains family. As to quaternary structure, F-type ATPases have 2 components, CF(1) - the catalytic core - and CF(0) - the membrane proton channel. CF(1) has five subunits: alpha(3), beta(3), gamma(1), delta(1), epsilon(1). CF(0) has four main subunits: a, b, b' and c.

The protein localises to the plastid. Its subcellular location is the chloroplast thylakoid membrane. It catalyses the reaction ATP + H2O + 4 H(+)(in) = ADP + phosphate + 5 H(+)(out). Functionally, produces ATP from ADP in the presence of a proton gradient across the membrane. The alpha chain is a regulatory subunit. The protein is ATP synthase subunit alpha, chloroplastic of Lactuca sativa (Garden lettuce).